Here is a 202-residue protein sequence, read N- to C-terminus: Putative 3-methyladenine DNA glycosylase (202 aa).

It belongs to the DNA glycosylase MPG family.

In Staphylococcus aureus (strain Mu3 / ATCC 700698), this protein is Putative 3-methyladenine DNA glycosylase.